We begin with the raw amino-acid sequence, 226 residues long: Urease accessory protein UreF (226 aa).

The protein belongs to the UreF family. In terms of assembly, ureD, UreF and UreG form a complex that acts as a GTP-hydrolysis-dependent molecular chaperone, activating the urease apoprotein by helping to assemble the nickel containing metallocenter of UreC. The UreE protein probably delivers the nickel.

The protein localises to the cytoplasm. Its function is as follows. Required for maturation of urease via the functional incorporation of the urease nickel metallocenter. This chain is Urease accessory protein UreF, found in Burkholderia multivorans (strain ATCC 17616 / 249).